Here is a 304-residue protein sequence, read N- to C-terminus: MARPYEGKLAIVTGASRGIGAAVARRLAAKGSNVLITFTSDSSRDLTRGLVEELSSKHGVHVQSVQTDLAKASTAAPIIVEAARTLFDSYSPPSGGKKFQVDILINNAGVSSNQFLNDPEKGAIDEAEFTRVYAINVLAPLLLTQAVAPHLPADRSGRIVNVSSVSASIGYLGQSVYAGSKGALEVMTRTWARELAERATVNSVNPGPAWGDMYAEAGPTFWRRNQPYVDAAPLMAYDGEEDVLRRAGGEADKFDRLVREQMGGRRPGFADEIAGTVDMLCTEESGWTTGSVVCANGGMRMSIA.

Positions 19, 68, and 107 each coordinate NADP(+). Catalysis depends on proton donor residues S163 and S164. 3 residues coordinate NADP(+): Y177, K181, and A209. The active-site Proton acceptor is Y177. Catalysis depends on K181, which acts as the Lowers pKa of active site Tyr.

It belongs to the short-chain dehydrogenases/reductases (SDR) family.

The enzyme catalyses D-sorbitol + NADP(+) = L-xylo-3-hexulose + NADPH + H(+). It functions in the pathway carbohydrate degradation. In terms of biological role, L-xylulose reductase involved in the catabolism of D-galactose through an oxidoreductive pathway. Catalyzes the NADPH-dependent reduction of L-xylo-3-hexulose. Is also active with D-ribulose and L-xylulose, and to a lesser extent with D-xylulose, D-fructose and L- and D-sorbose. In the reverse reaction, shows activity with D-sorbitol and D-mannitol, low activity with xylitol, but no activity with galactitol, ribitol, and L- and D-arabitol. This Hypocrea jecorina (strain QM6a) (Trichoderma reesei) protein is L-xylo-3-hexulose reductase.